Reading from the N-terminus, the 179-residue chain is Large ribosomal subunit protein uL6 (179 aa).

It belongs to the universal ribosomal protein uL6 family. Part of the 50S ribosomal subunit.

Functionally, this protein binds to the 23S rRNA, and is important in its secondary structure. It is located near the subunit interface in the base of the L7/L12 stalk, and near the tRNA binding site of the peptidyltransferase center. The protein is Large ribosomal subunit protein uL6 of Clostridium perfringens (strain ATCC 13124 / DSM 756 / JCM 1290 / NCIMB 6125 / NCTC 8237 / Type A).